The primary structure comprises 32 residues: Photosystem II reaction center protein T (32 aa).

The chain crosses the membrane as a helical span at residues 3 to 23; sequence TLVYTFLLIGTLAVLFAAVFF.

The protein belongs to the PsbT family. As to quaternary structure, PSII is composed of 1 copy each of membrane proteins PsbA, PsbB, PsbC, PsbD, PsbE, PsbF, PsbH, PsbI, PsbJ, PsbK, PsbL, PsbM, PsbT, PsbX, PsbY, PsbZ, Psb30/Ycf12, at least 3 peripheral proteins of the oxygen-evolving complex and a large number of cofactors. It forms dimeric complexes.

It is found in the plastid. The protein localises to the chloroplast thylakoid membrane. Functionally, found at the monomer-monomer interface of the photosystem II (PS II) dimer, plays a role in assembly and dimerization of PSII. PSII is a light-driven water plastoquinone oxidoreductase, using light energy to abstract electrons from H(2)O, generating a proton gradient subsequently used for ATP formation. This chain is Photosystem II reaction center protein T, found in Guillardia theta (Cryptophyte).